Reading from the N-terminus, the 92-residue chain is Small ribosomal subunit protein uS19 (92 aa).

It belongs to the universal ribosomal protein uS19 family.

In terms of biological role, protein S19 forms a complex with S13 that binds strongly to the 16S ribosomal RNA. This is Small ribosomal subunit protein uS19 from Granulibacter bethesdensis (strain ATCC BAA-1260 / CGDNIH1).